We begin with the raw amino-acid sequence, 209 residues long: uncharacterized protein (209 aa).

The MPN domain occupies 1-67; it reads MEILPKYKPE…LIMYNYWTID (67 aa). Residues His17, His19, and Asp30 each coordinate Zn(2+). The JAMM motif signature appears at 17-30; that stretch reads HTHPKGPAEPSIND.

This is an uncharacterized protein from Acidianus convivator (ATV).